The sequence spans 1228 residues: DNA repair protein rad5 (1228 aa).

Disordered regions lie at residues 1–96, 194–242, 280–302, and 445–474; these read MDRH…GTLT, PPVR…VLPS, QPPT…PRVS, and KAMD…QELE. A compositionally biased stretch (low complexity) spans 34 to 43; the sequence is PSSSPQFSAP. Over residues 70–83 the composition is skewed to acidic residues; the sequence is HNDDDDDDDDDDDE. The span at 211-237 shows a compositional bias: polar residues; sequence PKKSSTSQARSRSHAQAQPQPQSNTPT. Over residues 445–454 the composition is skewed to basic and acidic residues; it reads KAMDKAKAGD. Over residues 465 to 474 the composition is skewed to acidic residues; it reads EEAEEGQELE. A Helicase ATP-binding domain is found at 574 to 784; that stretch reads PKQEQHCLGG…FSLVRFLRVE (211 aa). Residue 587-594 participates in ATP binding; the sequence is DEMGLGKT. Residues 735-738 carry the DEAH box motif; that stretch reads DEAH. The segment at 967 to 1012 adopts an RING-type zinc-finger fold; it reads CPICAEEPMIDQAVTGCWHSACKKCLLDYIKHQTDRNEVPRCFQCR. The region spanning 1060–1216 is the Helicase C-terminal domain; the sequence is ALISHLRTLR…MMSDEEKKMQ (157 aa).

It belongs to the SNF2/RAD54 helicase family.

Its subcellular location is the cytoplasm. The protein resides in the nucleus. Functionally, probable helicase, member of the UBC2/RAD6 epistasis group. Functions with DNA repair protein uvs-2/rad18 in error-free postreplication DNA repair. Involved in the maintenance of wild-type rates of instability of simple repetitive sequences such as poly(GT) repeats. Seems to be involved in maintaining a balance which acts in favor of error-prone non-homologous joining during DNA double-strand breaks repairs. The sequence is that of DNA repair protein rad5 (mus-41) from Neurospora crassa (strain ATCC 24698 / 74-OR23-1A / CBS 708.71 / DSM 1257 / FGSC 987).